The sequence spans 204 residues: UPF0637 protein lwe1043 (204 aa).

The protein belongs to the UPF0637 family.

The protein is UPF0637 protein lwe1043 of Listeria welshimeri serovar 6b (strain ATCC 35897 / DSM 20650 / CCUG 15529 / CIP 8149 / NCTC 11857 / SLCC 5334 / V8).